The primary structure comprises 1165 residues: Activity-dependent neuroprotector homeobox protein 2 (1165 aa).

Residues 73–96 (YCCSLCRYSTKVLTSLKNHLHRYH) form a C2H2-type 1 zinc finger. The C2H2-type 2; degenerate zinc finger occupies 106–128 (IPCPNCPFSSQPRVVGKHFRMFH). A Glycyl lysine isopeptide (Lys-Gly) (interchain with G-Cter in SUMO2) cross-link involves residue Lys146. The C2H2-type 3; degenerate zinc-finger motif lies at 155–178 (FTCLKCNFSNTLYYSMKKHVLVAH). The C2H2-type 4 zinc finger occupies 215 to 240 (YYCKKCSAIASSQDALMYHILTSDAH). Low complexity predominate over residues 303–318 (SGTVQSVTVTPGTSGS). A disordered region spans residues 303-327 (SGTVQSVTVTPGTSGSLTHSPPTTA). The C2H2-type 5; degenerate zinc-finger motif lies at 696–718 (KTCPVCNELFPSNVYQVHMEVAH). The C2H2-type 6; degenerate zinc-finger motif lies at 724 to 746 (QLCQVCNELFPANVYQVHMEVAH). The C2H2-type 7; degenerate zinc finger occupies 777–798 (VRCLSCKCLVSQEELMHHLLMH). C2H2-type zinc fingers lie at residues 800-823 (LGCLFCPCTFHDVRGLVEHSRTKH) and 905-935 (LTCPFCLSTFMTADAYELHLKERHHVMPTVH). Residues 1005 to 1068 (PVKRKLPEGH…SGPSEDSLQA (64 aa)) form a disordered region. Glycyl lysine isopeptide (Lys-Gly) (interchain with G-Cter in SUMO2) cross-links involve residues Lys1009 and Lys1048. Residues 1009-1024 (KLPEGHLGPEDQRDGE) show a composition bias toward basic and acidic residues. A DNA-binding region (homeobox) is located at residues 1090–1132 (DYFHRRPYPSRKEVELLSSLLWVWKIDVASFFGKRRYICMKAI).

It belongs to the krueppel C2H2-type zinc-finger protein family. As to quaternary structure, may interact with SMARCA4/BRG1. Expressed widely, with the highest level in the brain.

It is found in the nucleus. Functionally, may be involved in transcriptional regulation. May play a role in neuronal function; perhaps involved in protection of brain tissues from oxidative stress. May be involved in erythroid differentiation. The sequence is that of Activity-dependent neuroprotector homeobox protein 2 (Adnp2) from Mus musculus (Mouse).